Reading from the N-terminus, the 220-residue chain is Deoxyribose-phosphate aldolase (220 aa).

Asp89 acts as the Proton donor/acceptor in catalysis. The active-site Schiff-base intermediate with acetaldehyde is the Lys151. Residue Lys180 is the Proton donor/acceptor of the active site.

It belongs to the DeoC/FbaB aldolase family. DeoC type 1 subfamily.

It is found in the cytoplasm. It carries out the reaction 2-deoxy-D-ribose 5-phosphate = D-glyceraldehyde 3-phosphate + acetaldehyde. The protein operates within carbohydrate degradation; 2-deoxy-D-ribose 1-phosphate degradation; D-glyceraldehyde 3-phosphate and acetaldehyde from 2-deoxy-alpha-D-ribose 1-phosphate: step 2/2. In terms of biological role, catalyzes a reversible aldol reaction between acetaldehyde and D-glyceraldehyde 3-phosphate to generate 2-deoxy-D-ribose 5-phosphate. The sequence is that of Deoxyribose-phosphate aldolase from Staphylococcus carnosus (strain TM300).